The following is a 149-amino-acid chain: Calmodulin (149 aa).

A2 carries the post-translational modification N-acetylalanine. EF-hand domains follow at residues 8–43 (EQIAEFKEAFSLFDKDGDGSITTKELGTVMRSLGQN), 44–79 (PTEAELQDMINEVDADGNGTIDFPEFLNLMARKMKD), 81–116 (DSEEELKEAFKVFDKDQNGYISAADWRHVMTNLGEK), and 117–149 (LTDEEVDEMIREADVDGDGQVNYEEFVKMMMAK). D21, D23, D25, S27, E32, D57, D59, N61, T63, E68, D94, D96, N98, Y100, and D105 together coordinate Ca(2+). Residue K116 is modified to N6,N6,N6-trimethyllysine. D130, D132, D134, Q136, and E141 together coordinate Ca(2+).

This sequence belongs to the calmodulin family.

Its function is as follows. Calmodulin mediates the control of a large number of enzymes, ion channels and other proteins by Ca(2+). Among the enzymes to be stimulated by the calmodulin-Ca(2+) complex are a number of protein kinases and phosphatases. This is Calmodulin from Mougeotia scalaris (Green alga).